The chain runs to 486 residues: CUGBP Elav-like family member 4 (486 aa).

Residues 1 to 298 form a sufficient for RNA-binding and MSE-dependent splicing activity region; the sequence is MYIKMATLAN…AAFAAAQMQQ (298 aa). Residues 18-28 are compositionally biased toward polar residues; that stretch reads LSTNGLGSSPG. 2 disordered regions span residues 18 to 39 and 121 to 149; these read LSTN…LSHS and LPGM…QPPS. The RRM 1 domain maps to 54–135; it reads IKLFIGQIPR…RPIQVKPADS (82 aa). The span at 138 to 149 shows a compositional bias: polar residues; it reads RGGSSCLRQPPS. An RRM 2 domain is found at 152–232; that stretch reads RKLFVGMLNK…SSLVVKFADT (81 aa). Residues 239-258 are necessary for TNNT2 exon 5 inclusion; the sequence is RRMQQMAGQMGMFNPMAIPF. The region spanning 404–479 is the RRM 3 domain; it reads PQPPPMIPQQ…KRLKVQLKRP (76 aa).

The protein belongs to the CELF/BRUNOL family. Ubiquitous. Strongly expressed in the cerebellum, hippocampus, amygdala, temporal and frontal cortex and frontal lobes.

It is found in the nucleus. The protein localises to the cytoplasm. Functionally, RNA-binding protein implicated in the regulation of pre-mRNA alternative splicing. Mediates exon inclusion and/or exclusion in pre-mRNA that are subject to tissue-specific and developmentally regulated alternative splicing. Specifically activates exon 5 inclusion of cardiac isoforms of TNNT2 during heart remodeling at the juvenile to adult transition. Promotes exclusion of both the smooth muscle (SM) and non-muscle (NM) exons in actinin pre-mRNAs. Activates the splicing of MAPT/Tau exon 10. Binds to muscle-specific splicing enhancer (MSE) intronic sites flanking the alternative exon 5 of TNNT2 pre-mRNA. This Homo sapiens (Human) protein is CUGBP Elav-like family member 4 (CELF4).